The primary structure comprises 618 residues: Sodium-coupled monocarboxylate transporter 2 (618 aa).

Topologically, residues 1–9 (MEVKNFAVW) are extracellular. Residues 10–30 (DYVVFAALFFISSGIGVFFAI) form a helical membrane-spanning segment. The Cytoplasmic segment spans residues 31–47 (KERKKATSREFLVGGRQ). The chain crosses the membrane as a helical span at residues 48 to 68 (MSFGPVGLSLTASFMSAVTVL). Residues 69 to 82 (GTPSEVYRFGASFL) lie on the Extracellular side of the membrane. A helical membrane pass occupies residues 83-103 (VFFIAYLFVILLTSELFLPVF). The Cytoplasmic segment spans residues 104–128 (YRSGITSTYEYLQLRFNKPVRYAAT). The helical transmembrane segment at 129–149 (VIYIVQTILYTGVVVYAPALA) threads the bilayer. The Extracellular segment spans residues 150–157 (LNQVTGFD). A helical transmembrane segment spans residues 158–178 (LWGSVFATGIVCTFYCTLGGL). Over 179 to 180 (KA) the chain is Cytoplasmic. Residues 181-201 (VVWTDAFQMVVMIVGFLTVLI) traverse the membrane as a helical segment. Residues 202-235 (QGSTHAGGFHNVLEQSTNGSRLHIFDFDVDPLRR) are Extracellular-facing. A helical transmembrane segment spans residues 236–256 (HTFWTITVGGTFTWLGIYGVN). The Cytoplasmic segment spans residues 257–275 (QSTIQRCISCKTEKHAKLA). A helical transmembrane segment spans residues 276–296 (LYFNLLGLWIILVCAVFSGLI). At 297 to 321 (MYSHFKDCDPWTSGIISAPDQLMPY) the chain is on the extracellular side. A helical membrane pass occupies residues 322–342 (FVMEIFATMPGLPGLFVACAF). The Cytoplasmic segment spans residues 343 to 385 (SGTLSTVASSINALATVTFEDFVKSCFPHLSDKLSTWISKGLC). Residues 386-406 (LLFGVMCTSMAVAASVMGGVV) traverse the membrane as a helical segment. The Extracellular portion of the chain corresponds to 407–411 (QASLS). The helical transmembrane segment at 412 to 432 (IHGMCGGPMLGLFSLGIVFPF) threads the bilayer. Residues 433–437 (VNWKG) lie on the Cytoplasmic side of the membrane. A helical transmembrane segment spans residues 438–458 (ALGGLLTGITLSFWVAIGAFI). Residues 459 to 504 (YPAPASKTWPLPLSTDQCIKSNVTATGPPVLSSRPGIADTWYSISY) lie on the Extracellular side of the membrane. N-linked (GlcNAc...) asparagine glycosylation occurs at N480. A helical membrane pass occupies residues 505–525 (LYYSAVGCLGCIVAGVIISLI). The Cytoplasmic portion of the chain corresponds to 526–618 (TGRQRGEDIQ…NNMAFETTHF (93 aa)).

It belongs to the sodium:solute symporter (SSF) (TC 2.A.21) family.

Its subcellular location is the apical cell membrane. It catalyses the reaction (S)-lactate(out) + Na(+)(out) = (S)-lactate(in) + Na(+)(in). The catalysed reaction is nicotinate(out) + Na(+)(out) = nicotinate(in) + Na(+)(in). The enzyme catalyses pyruvate(out) + Na(+)(out) = pyruvate(in) + Na(+)(in). It carries out the reaction propanoate(out) + Na(+)(out) = propanoate(in) + Na(+)(in). It catalyses the reaction butanoate(out) + Na(+)(out) = butanoate(in) + Na(+)(in). The catalysed reaction is acetoacetate(out) + Na(+)(out) = acetoacetate(in) + Na(+)(in). Cotransport of monocarboxylates and nicotinate strongly inhibited by ibuprofen, fenoprofen and ketoprofen. Its function is as follows. Acts as an electroneutral and low-affinity sodium (Na(+))-dependent sodium-coupled solute transporter. Catalyzes the transport across the plasma membrane of many monocarboxylates such as lactate, pyruvate, nicotinate, propionate, butyrate and beta-D-hydroxybutyrate. May be responsible for the first step of reabsorption of monocarboxylates from the lumen of the proximal tubule of the kidney and the small intestine. May play also a role in monocarboxylates transport in the retina. This chain is Sodium-coupled monocarboxylate transporter 2, found in Homo sapiens (Human).